A 302-amino-acid chain; its full sequence is Epoxyqueuosine reductase (302 aa).

Asp128 serves as the catalytic Proton donor. Residues 170 to 202 enclose the 4Fe-4S ferredoxin-type 1 domain; it reads LPLQADGPIRDYCGTCTACIDACPTDAITPYEV. [4Fe-4S] cluster-binding residues include Cys182, Cys185, Cys188, Cys192, Cys207, Cys234, Cys237, and Cys241. The region spanning 221–251 is the 4Fe-4S ferredoxin-type 2 domain; that stretch reads NEFKGKMENWIFGCDICQDVCPWNSFARPHS.

It belongs to the QueG family. As to quaternary structure, monomer. It depends on cob(II)alamin as a cofactor. [4Fe-4S] cluster is required as a cofactor.

The protein resides in the cytoplasm. It carries out the reaction epoxyqueuosine(34) in tRNA + AH2 = queuosine(34) in tRNA + A + H2O. It participates in tRNA modification; tRNA-queuosine biosynthesis. In terms of biological role, catalyzes the conversion of epoxyqueuosine (oQ) to queuosine (Q), which is a hypermodified base found in the wobble positions of tRNA(Asp), tRNA(Asn), tRNA(His) and tRNA(Tyr). This chain is Epoxyqueuosine reductase, found in Leadbetterella byssophila (strain DSM 17132 / JCM 16389 / KACC 11308 / NBRC 106382 / 4M15).